The chain runs to 417 residues: UDP-N-acetylglucosamine 1-carboxyvinyltransferase (417 aa).

22-23 (KN) is a binding site for phosphoenolpyruvate. Arg93 lines the UDP-N-acetyl-alpha-D-glucosamine pocket. The active-site Proton donor is the Cys117. The residue at position 117 (Cys117) is a 2-(S-cysteinyl)pyruvic acid O-phosphothioketal. Residues 122–126 (RPVDL), Asp305, and Ile327 contribute to the UDP-N-acetyl-alpha-D-glucosamine site.

This sequence belongs to the EPSP synthase family. MurA subfamily.

The protein resides in the cytoplasm. It catalyses the reaction phosphoenolpyruvate + UDP-N-acetyl-alpha-D-glucosamine = UDP-N-acetyl-3-O-(1-carboxyvinyl)-alpha-D-glucosamine + phosphate. It participates in cell wall biogenesis; peptidoglycan biosynthesis. Functionally, cell wall formation. Adds enolpyruvyl to UDP-N-acetylglucosamine. The chain is UDP-N-acetylglucosamine 1-carboxyvinyltransferase from Thiobacillus denitrificans (strain ATCC 25259 / T1).